A 242-amino-acid chain; its full sequence is Protein GrpE (242 aa).

Disordered regions lie at residues 1 to 75 (MSDD…DDEL) and 93 to 136 (VADL…QQIK). The segment covering 23 to 37 (DAESSAAEDASAADD) has biased composition (low complexity). Residues 38 to 49 (AAPEESTGDEQA) are compositionally biased toward acidic residues. Residues 50–64 (GETTAESSDAESVTV) are compositionally biased toward polar residues. Residues 96–108 (LETERDEAEETAS) are compositionally biased toward acidic residues. Residues 124 to 133 (YKKRAKKRQQ) show a composition bias toward basic residues.

The protein belongs to the GrpE family. As to quaternary structure, homodimer.

It is found in the cytoplasm. In terms of biological role, participates actively in the response to hyperosmotic and heat shock by preventing the aggregation of stress-denatured proteins, in association with DnaK and GrpE. It is the nucleotide exchange factor for DnaK and may function as a thermosensor. Unfolded proteins bind initially to DnaJ; upon interaction with the DnaJ-bound protein, DnaK hydrolyzes its bound ATP, resulting in the formation of a stable complex. GrpE releases ADP from DnaK; ATP binding to DnaK triggers the release of the substrate protein, thus completing the reaction cycle. Several rounds of ATP-dependent interactions between DnaJ, DnaK and GrpE are required for fully efficient folding. The protein is Protein GrpE of Haloferax mediterranei (strain ATCC 33500 / DSM 1411 / JCM 8866 / NBRC 14739 / NCIMB 2177 / R-4) (Halobacterium mediterranei).